The sequence spans 141 residues: Lutropin subunit beta (141 aa).

The signal sequence occupies residues 1 to 20; that stretch reads MEMLQGLLLWLLLSVAGVWA. A Blocked amino end (Ser) modification is found at Ser-21. Cystine bridges form between Cys-29–Cys-77, Cys-43–Cys-92, Cys-46–Cys-130, Cys-54–Cys-108, Cys-58–Cys-110, and Cys-113–Cys-120. Asn-33 carries an N-linked (GlcNAc...) asparagine glycan.

The protein belongs to the glycoprotein hormones subunit beta family. In terms of assembly, heterodimer of a common alpha chain and a unique beta chain which confers biological specificity to thyrotropin, lutropin, follitropin and gonadotropin.

Its subcellular location is the secreted. In terms of biological role, promotes spermatogenesis and ovulation by stimulating the testes and ovaries to synthesize steroids. This Sus scrofa (Pig) protein is Lutropin subunit beta (LHB).